The primary structure comprises 134 residues: Large-conductance mechanosensitive channel (134 aa).

2 helical membrane-spanning segments follow: residues 16-36 (VIDL…VTAL) and 84-104 (INTL…IKVI).

Belongs to the MscL family. As to quaternary structure, homopentamer.

It is found in the cell inner membrane. Its function is as follows. Channel that opens in response to stretch forces in the membrane lipid bilayer. May participate in the regulation of osmotic pressure changes within the cell. The protein is Large-conductance mechanosensitive channel of Stenotrophomonas maltophilia (strain R551-3).